The sequence spans 221 residues: Very-long-chain (3R)-3-hydroxyacyl-CoA dehydratase PASTICCINO 2B (221 aa).

Over 1-11 (MTGVGSAVRRL) the chain is Cytoplasmic. The helical transmembrane segment at 12–32 (YLSVYNWAVFFGWAQVLYYAV) threads the bilayer. At 33 to 51 (TTLLESGHEAVYAAVERPL) the chain is on the lumenal side. The chain crosses the membrane as a helical span at residues 52–70 (QFAQTAAFLEILHGLVGLV). Residues 71–76 (RSPVSA) lie on the Cytoplasmic side of the membrane. The chain crosses the membrane as a helical span at residues 77–95 (TLPQIGSRLFLTWGILWSF). Residues 96–100 (PETHS) lie on the Lumenal side of the membrane. Residues 101–121 (HILVTSLVISWSITEIIRYSF) form a helical membrane-spanning segment. The Cytoplasmic portion of the chain corresponds to 122 to 141 (FGMKETFGFAPSWLLWLRYS). The helical transmembrane segment at 142–165 (TFMVLYPTGISSEVGLIYIALPYM) threads the bilayer. Residues Y147 and E154 contribute to the active site. Residues 166–184 (KATEKYCLRMPNKWNFSFD) lie on the Lumenal side of the membrane. A helical transmembrane segment spans residues 185–209 (FSYASILSLAVYVPGSPHMFTYMLA). Residues 210–221 (QRKKALAKAKAA) lie on the Cytoplasmic side of the membrane.

This sequence belongs to the very long-chain fatty acids dehydratase HACD family.

The protein localises to the endoplasmic reticulum membrane. It catalyses the reaction a very-long-chain (3R)-3-hydroxyacyl-CoA = a very-long-chain (2E)-enoyl-CoA + H2O. It participates in lipid metabolism; fatty acid biosynthesis. Its function is as follows. Catalyzes the third of the four reactions of the long-chain fatty acids elongation cycle. This endoplasmic reticulum-bound enzymatic process, allows the addition of two carbons to the chain of long- and very long-chain fatty acids/VLCFAs per cycle. This enzyme catalyzes the dehydration of the 3-hydroxyacyl-CoA intermediate into trans-2,3-enoyl-CoA, within each cycle of fatty acid elongation. Thereby, it participates in the production of VLCFAs of different chain lengths that are involved in multiple biological processes as precursors of membrane lipids and lipid mediators. May be an anti-phosphatase that prevents CDKA-1 dephosphorylation and activation. Involved in the hormonal control of cell division and differentiation. Required for proliferation control of meristematic and non-meristematic cells. Negative regulator of the cell cycle. The protein is Very-long-chain (3R)-3-hydroxyacyl-CoA dehydratase PASTICCINO 2B (PAS2B) of Oryza sativa subsp. japonica (Rice).